A 707-amino-acid chain; its full sequence is Ferric reduction oxidase 5 (707 aa).

Residues 1 to 9 lie on the Cytoplasmic side of the membrane; the sequence is MGNMRSLVK. The chain crosses the membrane as a helical span at residues 10-29; it reads MLMVVLFLGWIFVWIMISTN. The Extracellular portion of the chain corresponds to 30–54; sequence RFQNIWTPKLAKYLKTTYFGPQGMN. A helical transmembrane segment spans residues 55–73; it reads LVLLTVPMMFIAVLSCVYL. Residues 74 to 106 lie on the Cytoplasmic side of the membrane; that stretch reads HTQKQPSQTQSLYKCREWKVKGRMGRVMMVMNP. The chain crosses the membrane as a helical span at residues 107–130; the sequence is LGIVTATELTFSLLFLALLVWALS. Topologically, residues 131 to 198 are extracellular; the sequence is NYLYLSYHVH…VGLTSESSIK (68 aa). In terms of domain architecture, Ferric oxidoreductase spans 165 to 284; it reads GYVGHYCWAF…HLYGLYIVFY (120 aa). Residues 199–222 form a helical membrane-spanning segment; sequence YHIWLGHVSNFCFLVHTVVFLIYW. Positions 200 and 214 each coordinate heme. At 223 to 272 the chain is on the cytoplasmic side; that stretch reads AMVNKLMETFAWNATYVPNLAGTIAMVIGIAIWVTSLPSFRRKKFEIFFY. Residues 273–297 form a helical membrane-spanning segment; it reads THHLYGLYIVFYAIHVGDSWFCMIL. Heme contacts are provided by His-274 and His-287. At 298 to 319 the chain is on the extracellular side; that stretch reads PNIFLFFIDRYLRFLQSTKRSR. An FAD-binding FR-type domain is found at 313-416; that stretch reads QSTKRSRLVS…EGPYGPNSFD (104 aa). The helical transmembrane segment at 320–340 threads the bilayer; it reads LVSAKILPSDNLELTFAKTSG. Topologically, residues 341 to 533 are cytoplasmic; it reads LHYTPTSILF…PISPVLGPNN (193 aa). 362–365 is a binding site for FAD; that stretch reads HPFT. 408–411 provides a ligand contact to NAD(+); that stretch reads GPYG. The chain crosses the membrane as a helical span at residues 534–556; it reads FLWLGVVILSSFVMFLLLIGIVT. Topologically, residues 557-576 are extracellular; the sequence is RYYIYPVDHNTGSIYNFTYR. A helical transmembrane segment spans residues 577 to 598; the sequence is VLWVMFLGCVCIFISSSIIFLW. The Cytoplasmic segment spans residues 599 to 707; it reads RKKENKEGDK…LHFEAISFNW (109 aa). Positions 608–630 are disordered; sequence KDSKKQVQSVEFQTPTSSPGSWF. Positions 613–627 are enriched in polar residues; the sequence is QVQSVEFQTPTSSPG.

It belongs to the ferric reductase (FRE) family. Requires FAD as cofactor. In terms of tissue distribution, expressed at low levels in roots, shoots, pedicels and inflorescence stems, flowers, sepals, stigmas and anther filaments.

Its subcellular location is the cell membrane. The catalysed reaction is 2 a Fe(II)-siderophore + NAD(+) + H(+) = 2 a Fe(III)-siderophore + NADH. Ferric chelate reductase probably involved in iron reduction in shoots. May participate in the transport of electrons to a Fe(3+) ion via FAD and heme intermediates. May act in iron metabolism in reproductive organs. May function as root surface cupric chelate reductase and participate in the reduction of Cu(2+), for Cu(+) acquisition via Cu(+) transporters in response to copper deficiency. The chain is Ferric reduction oxidase 5 (FRO5) from Arabidopsis thaliana (Mouse-ear cress).